The chain runs to 505 residues: ATP synthase subunit beta (505 aa).

157–164 contacts ATP; sequence GGAGVGKT.

The protein belongs to the ATPase alpha/beta chains family. As to quaternary structure, F-type ATPases have 2 components, CF(1) - the catalytic core - and CF(0) - the membrane proton channel. CF(1) has five subunits: alpha(3), beta(3), gamma(1), delta(1), epsilon(1). CF(0) has three main subunits: a(1), b(2) and c(9-12). The alpha and beta chains form an alternating ring which encloses part of the gamma chain. CF(1) is attached to CF(0) by a central stalk formed by the gamma and epsilon chains, while a peripheral stalk is formed by the delta and b chains.

The protein resides in the cell inner membrane. The catalysed reaction is ATP + H2O + 4 H(+)(in) = ADP + phosphate + 5 H(+)(out). In terms of biological role, produces ATP from ADP in the presence of a proton gradient across the membrane. The catalytic sites are hosted primarily by the beta subunits. In Bacteroides thetaiotaomicron (strain ATCC 29148 / DSM 2079 / JCM 5827 / CCUG 10774 / NCTC 10582 / VPI-5482 / E50), this protein is ATP synthase subunit beta.